The sequence spans 3291 residues: Protocadherin-16 (3291 aa).

The N-terminal stretch at 1–35 (MQKELSVALSCPGMKSLRTLLPLLVLLGATVPGSW) is a signal peptide. Over 36–2933 (GQAGSLDLQI…PDLNLLLVGA (2898 aa)) the chain is Extracellular. Cadherin domains follow at residues 37 to 137 (QAGS…APAF), 138 to 249 (PQAR…APAF), 250 to 356 (NQSR…QPSM), 369 to 466 (VSEA…APAF), 476 to 572 (LPEV…EPQF), 573 to 679 (QRTF…PPQF), 680 to 784 (YPRE…PPIF), 785 to 888 (EQLQ…SPAF), 889 to 994 (PAPE…APRF), 995 to 1105 (DSPT…EPTF), 1100 to 1205 (SEEP…SPTF), 1218 to 1317 (IQVP…SPDL), 1326 to 1429 (VPVV…APTF), 1430 to 1539 (ARDP…APVF), 1539 to 1642 (FASP…APAF), 1643 to 1744 (PQQE…TPTF), 1745 to 1848 (GNTH…APVF), 1849 to 1953 (PVPS…APAF), 1976 to 2061 (LATL…GPRF), 2062 to 2164 (PRTS…APRF), 2165 to 2270 (LRPH…RPTI), 2270 to 2369 (IPQP…VPTF), 2370 to 2475 (SQSL…APSF), 2476 to 2595 (TLPH…PPVF), 2596 to 2699 (TRAS…GPAF), 2700 to 2806 (PLSL…DPVF), and 2807 to 2926 (LAPS…APDL). Residue Asn396 is glycosylated (N-linked (GlcNAc...) asparagine). Asn2354 is a glycosylation site (N-linked (GlcNAc...) asparagine). Residues 2867–2886 (SRAPGSGTTTSGGGGRTRRE) form a disordered region. The helical transmembrane segment at 2934–2954 (VAASLGVVVVLALAALVLGLV) threads the bilayer. Topologically, residues 2955–3291 (RARSRKAEAA…EPPDDTELRI (337 aa)) are cytoplasmic. A disordered region spans residues 2978–3033 (SLQKLGREPPSPPPSEHLYHQTLPSYGGPGAGGPYPRGGSLDPSHSSGRGSAEAAE). The segment covering 3004-3013 (GGPGAGGPYP) has biased composition (gly residues). The residue at position 3048 (Ser3048) is a Phosphoserine. Disordered stretches follow at residues 3051-3081 (SSLAARGPDSGIQQDADGLSDTSCEPPAPDT) and 3226-3291 (ASHR…ELRI). Over residues 3237–3259 (SLSSAAMSPSFSPSLSPLAARSP) the composition is skewed to low complexity. The segment covering 3270 to 3279 (PSASALSTES) has biased composition (polar residues).

In terms of assembly, heterophilic interaction with FAT4; this interaction affects their respective protein levels. In terms of tissue distribution, expressed in the epicardium and atrioventricular sulcus (at protein level).

The protein localises to the cell membrane. Calcium-dependent cell-adhesion protein. Mediates functions in neuroprogenitor cell proliferation and differentiation. In the heart, has a critical role for proper morphogenesis of the mitral valve, acting in the regulation of cell migration involved in valve formation. The polypeptide is Protocadherin-16 (Dchs1) (Mus musculus (Mouse)).